A 118-amino-acid polypeptide reads, in one-letter code: Ribulose bisphosphate carboxylase small subunit (118 aa).

This sequence belongs to the RuBisCO small chain family. As to quaternary structure, heterohexadecamer of 8 large and 8 small subunits.

RuBisCO catalyzes two reactions: the carboxylation of D-ribulose 1,5-bisphosphate, the primary event in carbon dioxide fixation, as well as the oxidative fragmentation of the pentose substrate. Both reactions occur simultaneously and in competition at the same active site. Although the small subunit is not catalytic it is essential for maximal activity. This is Ribulose bisphosphate carboxylase small subunit from Rhodobacter capsulatus (Rhodopseudomonas capsulata).